Here is a 278-residue protein sequence, read N- to C-terminus: Digeranylgeranylglyceryl phosphate synthase (278 aa).

A run of 8 helical transmembrane segments spans residues 17-37 (MASF…LEMV), 40-60 (LIFA…LNDI), 91-111 (LLVF…LMAV), 129-149 (IIGN…GGIA), 153-173 (IDVT…REII), 204-224 (LLLV…FFGI), 226-246 (YLIS…PLLI), and 257-277 (SRNI…GSFF).

This sequence belongs to the UbiA prenyltransferase family. DGGGP synthase subfamily. The cofactor is Mg(2+).

It localises to the cell membrane. The catalysed reaction is sn-3-O-(geranylgeranyl)glycerol 1-phosphate + (2E,6E,10E)-geranylgeranyl diphosphate = 2,3-bis-O-(geranylgeranyl)-sn-glycerol 1-phosphate + diphosphate. It participates in membrane lipid metabolism; glycerophospholipid metabolism. In terms of biological role, prenyltransferase that catalyzes the transfer of the geranylgeranyl moiety of geranylgeranyl diphosphate (GGPP) to the C2 hydroxyl of (S)-3-O-geranylgeranylglyceryl phosphate (GGGP). This reaction is the second ether-bond-formation step in the biosynthesis of archaeal membrane lipids. In Methanococcus maripaludis (strain C5 / ATCC BAA-1333), this protein is Digeranylgeranylglyceryl phosphate synthase.